The sequence spans 746 residues: NAD(P)H-quinone oxidoreductase subunit 5, chloroplastic (746 aa).

The next 16 membrane-spanning stretches (helical) occupy residues 9–29 (WIIPFIPLPVPILLGVGLLLF), 40–60 (WTFLSIFLLSIVMIFSLYLSI), 89–109 (IDPLTSIMSILITTVGILVLI), 125–145 (FAYMGFFNTSMLGLVTSSNLI), 147–167 (VYFFWELVGMCSYLLIGFWFT), 185–205 (GDFGLLLGILGLYWITGSFEF), 221–241 (VNLLFLTLCAFLLFVGPIAKS), 258–278 (TPISALIHAATMVAAGIFLVA), 280–300 (LLPLFIVIPSIMYIISLIGII), 327–347 (LGYMMLALGMGSYRSALFHLI), 354–374 (ALLFLGSGSIIHSMEAIVGYS), 396–416 (TAFLIGTLSLCGIPPLACFWS), 425–445 (LLFSPIFAIIACSTAGLTAFY), 547–567 (ILFPMLILLLFTLFIGAIGIP), 608–628 (FSVSIAFFGIFIAYCLYKPFY), and 723–743 (YLFLYLSYVLIFLMILLFFYF).

Belongs to the complex I subunit 5 family. In terms of assembly, NDH is composed of at least 16 different subunits, 5 of which are encoded in the nucleus.

It is found in the plastid. Its subcellular location is the chloroplast thylakoid membrane. It catalyses the reaction a plastoquinone + NADH + (n+1) H(+)(in) = a plastoquinol + NAD(+) + n H(+)(out). It carries out the reaction a plastoquinone + NADPH + (n+1) H(+)(in) = a plastoquinol + NADP(+) + n H(+)(out). NDH shuttles electrons from NAD(P)H:plastoquinone, via FMN and iron-sulfur (Fe-S) centers, to quinones in the photosynthetic chain and possibly in a chloroplast respiratory chain. The immediate electron acceptor for the enzyme in this species is believed to be plastoquinone. Couples the redox reaction to proton translocation, and thus conserves the redox energy in a proton gradient. The protein is NAD(P)H-quinone oxidoreductase subunit 5, chloroplastic (ndhF) of Olimarabidopsis pumila (Dwarf rocket).